The chain runs to 180 residues: Signaling threshold-regulating transmembrane adapter 1 (180 aa).

Topologically, residues 1 to 24 (MSRDYNCTTDDQLAWGIPSISHAW) are extracellular. An N-linked (GlcNAc...) asparagine glycan is attached at asparagine 6. The chain crosses the membrane as a helical; Signal-anchor for type III membrane protein span at residues 25–45 (GLWALLGVVTVLLLISLAALL). Residues 46–180 (SQWTRGRRRN…AYANSQPAPS (135 aa)) are Cytoplasmic-facing. Residues serine 63 and serine 66 each carry the phosphoserine modification. Phosphotyrosine is present on tyrosine 73. Residues 73–76 (YGNL) form an interaction with GRB2 region. The segment at 81-103 (TGRLSQEPRSEEQDPPSSGGLAR) is disordered. 2 positions are modified to phosphoserine: serine 85 and serine 90. 3 positions are modified to phosphotyrosine: tyrosine 111, tyrosine 132, and tyrosine 153. Positions 130-135 (IKYCEV) are interaction with PTPN11. The interval 153 to 156 (YASV) is interaction with CSK. Phosphoserine is present on serine 166. Tyrosine 172 carries the post-translational modification Phosphotyrosine. The segment at 172-175 (YANS) is interaction with GRB2.

As to quaternary structure, homodimer; disulfide-linked. When phosphorylated, interacts with PTPN11/SHP2, GRB2 and CSK. In terms of processing, phosphorylated on tyrosines upon TCR activation; which leads to the recruitment of PTPN11, GRB2 and CSK. As to expression, expressed in thymus and spleen, with highest levels in immature thymocytes (at protein level).

It is found in the cell membrane. Its function is as follows. Negatively regulates T-cell antigen receptor (TCR)-mediated signaling. Involved in positive selection of T-cells. The polypeptide is Signaling threshold-regulating transmembrane adapter 1 (Sit1) (Mus musculus (Mouse)).